The chain runs to 1031 residues: Beta-galactosidase (1031 aa).

2 residues coordinate substrate: Asn-98 and Asp-197. Asp-197 contacts Na(+). The Mg(2+) site is built by Glu-412, His-414, and Glu-457. Residues Glu-457 and 533-536 (EYAH) each bind substrate. Glu-457 (proton donor) is an active-site residue. Glu-533 serves as the catalytic Nucleophile. Asn-593 serves as a coordination point for Mg(2+). Na(+) is bound by residues Phe-597 and Asp-600. Asp-600 and Trp-1005 together coordinate substrate.

This sequence belongs to the glycosyl hydrolase 2 family. As to quaternary structure, homotetramer. Requires Mg(2+) as cofactor. Na(+) serves as cofactor.

The catalysed reaction is Hydrolysis of terminal non-reducing beta-D-galactose residues in beta-D-galactosides.. This is Beta-galactosidase from Oenococcus oeni (strain ATCC BAA-331 / PSU-1).